The primary structure comprises 319 residues: Aspartate carbamoyltransferase catalytic subunit (319 aa).

Residues Arg54 and Thr55 each coordinate carbamoyl phosphate. L-aspartate is bound at residue Lys82. Residues Arg104, His134, and Gln137 each contribute to the carbamoyl phosphate site. 2 residues coordinate L-aspartate: Arg171 and Arg227. The carbamoyl phosphate site is built by Gly271 and Pro272.

The protein belongs to the aspartate/ornithine carbamoyltransferase superfamily. ATCase family. As to quaternary structure, heterododecamer (2C3:3R2) of six catalytic PyrB chains organized as two trimers (C3), and six regulatory PyrI chains organized as three dimers (R2).

The catalysed reaction is carbamoyl phosphate + L-aspartate = N-carbamoyl-L-aspartate + phosphate + H(+). The protein operates within pyrimidine metabolism; UMP biosynthesis via de novo pathway; (S)-dihydroorotate from bicarbonate: step 2/3. In terms of biological role, catalyzes the condensation of carbamoyl phosphate and aspartate to form carbamoyl aspartate and inorganic phosphate, the committed step in the de novo pyrimidine nucleotide biosynthesis pathway. This chain is Aspartate carbamoyltransferase catalytic subunit, found in Kineococcus radiotolerans (strain ATCC BAA-149 / DSM 14245 / SRS30216).